Consider the following 93-residue polypeptide: Small ribosomal subunit protein uS19 (93 aa).

The interval Met1–Asn23 is disordered. Residues Pro9–Asn23 show a composition bias toward basic and acidic residues.

This sequence belongs to the universal ribosomal protein uS19 family.

In terms of biological role, protein S19 forms a complex with S13 that binds strongly to the 16S ribosomal RNA. The protein is Small ribosomal subunit protein uS19 of Nocardioides sp. (strain ATCC BAA-499 / JS614).